Consider the following 895-residue polypeptide: Zinc finger protein 574 (895 aa).

3 consecutive C2H2-type zinc fingers follow at residues 16–38 (YVCS…QNSH), 76–98 (YQCL…QELH), and 126–148 (YECV…RQTH). Position 164 is a phosphoserine (Ser164). The C2H2-type 4 zinc finger occupies 214-236 (YKCSECSQLFQLPADFLEHQATH). Positions 239–301 (APVPESQEPA…RARRNNSGEA (63 aa)) are disordered. Positions 247 to 257 (PALQQEVQASS) are enriched in polar residues. Residues 274 to 287 (HSYELRNGEAIGRD) are compositionally biased toward basic and acidic residues. Ser298 is subject to Phosphoserine. 4 consecutive C2H2-type zinc fingers follow at residues 309–331 (LFCS…LRSH), 336–358 (FKCP…LGDH), 364–386 (FLCV…RRAH), and 392–413 (HSCP…RRTH). The interval 434-460 (FPEPAPAETGEPEAPEPPVSEETSAGP) is disordered. C2H2-type zinc fingers lie at residues 466-489 (YRCL…RFVH), 495-517 (HKCS…LRTH), 523-545 (FPCP…RLTH), 551-573 (YRCG…RLVH), 579-601 (YRCQ…RYHH), and 607-630 (YKCR…LVVH). A C2H2-type 15; degenerate zinc finger spans residues 636–659 (HRCPSCGAAFPSSLRLREHRCAAA). The segment at 667-689 (FECGTCGKKVGSAARLQAHEAAH) adopts a C2H2-type 16 zinc-finger fold. Residues 687–732 (AAHAAAGPGEVLAKEPPAPRAPRATRAPVASPAALGGTATASPAPA) are disordered. Residues 707–731 (APRATRAPVASPAALGGTATASPAP) are compositionally biased toward low complexity. Phosphoserine is present on Ser717. Position 724 is a phosphothreonine (Thr724). Position 728 is a phosphoserine (Ser728). C2H2-type zinc fingers lie at residues 737–759 (LECS…RRIH), 765–787 (YPCP…RRLH), 793–815 (FACE…RRIH), and 821–843 (YSCP…RKTH). At Arg831 the chain carries Asymmetric dimethylarginine.

The protein belongs to the krueppel C2H2-type zinc-finger protein family.

The protein localises to the nucleus. May be involved in transcriptional regulation. The chain is Zinc finger protein 574 (ZNF574) from Pongo abelii (Sumatran orangutan).